Reading from the N-terminus, the 458-residue chain is Tol-Pal system protein TolB (458 aa).

A signal peptide spans 1 to 23 (MSSVIRKWALTALMAVSSTALFA).

The protein belongs to the TolB family. The Tol-Pal system is composed of five core proteins: the inner membrane proteins TolA, TolQ and TolR, the periplasmic protein TolB and the outer membrane protein Pal. They form a network linking the inner and outer membranes and the peptidoglycan layer.

The protein localises to the periplasm. In terms of biological role, part of the Tol-Pal system, which plays a role in outer membrane invagination during cell division and is important for maintaining outer membrane integrity. This Zymomonas mobilis subsp. mobilis (strain ATCC 31821 / ZM4 / CP4) protein is Tol-Pal system protein TolB.